We begin with the raw amino-acid sequence, 65 residues long: Alpha-toxin Bs-Tx28 (65 aa).

In terms of domain architecture, LCN-type CS-alpha/beta spans 3-65 (RDAYIADDKN…VPIRIPGKCR (63 aa)). 4 cysteine pairs are disulfide-bonded: C13-C64, C17-C37, C23-C47, and C27-C49. An Arginine amide modification is found at R65.

The protein belongs to the long (4 C-C) scorpion toxin superfamily. Sodium channel inhibitor family. Alpha subfamily. In terms of tissue distribution, expressed by the venom gland.

The protein resides in the secreted. Alpha toxins bind voltage-independently at site-3 of sodium channels (Nav) and inhibit the inactivation of the activated channels, thereby blocking neuronal transmission. This toxin inhibits the inactivation of activated TTX-sensitive sodium channels (Nav). The polypeptide is Alpha-toxin Bs-Tx28 (Hottentotta tamulus sindicus (Scorpion)).